Consider the following 387-residue polypeptide: Galactokinase (387 aa).

A substrate-binding site is contributed by 33 to 36 (EHID). Residues Ser67 and 124–130 (GAGLSSS) each bind ATP. Mg(2+) is bound by residues Ser130 and Glu162. The active-site Proton acceptor is the Asp174. Tyr224 lines the substrate pocket.

It belongs to the GHMP kinase family. GalK subfamily.

It is found in the cytoplasm. It catalyses the reaction alpha-D-galactose + ATP = alpha-D-galactose 1-phosphate + ADP + H(+). It functions in the pathway carbohydrate metabolism; galactose metabolism. Functionally, catalyzes the transfer of the gamma-phosphate of ATP to D-galactose to form alpha-D-galactose-1-phosphate (Gal-1-P). In Clostridium perfringens (strain ATCC 13124 / DSM 756 / JCM 1290 / NCIMB 6125 / NCTC 8237 / Type A), this protein is Galactokinase.